A 734-amino-acid chain; its full sequence is Photosystem I P700 chlorophyll a apoprotein A2 (734 aa).

A run of 8 helical transmembrane segments spans residues 46 to 69 (IFAS…FHVA), 135 to 158 (LYTG…LHLQ), 175 to 199 (LNHH…HVAI), 273 to 291 (MAHH…GHMY), 330 to 353 (IHFQ…QHMY), 369 to 395 (AALY…IFFI), 417 to 439 (AIKS…LYVH), and 517 to 535 (FLVH…LILV). 2 residues coordinate [4Fe-4S] cluster: Cys559 and Cys568. Transmembrane regions (helical) follow at residues 575-596 (AFYL…YWHW) and 643-665 (LSVW…MFLI). Chlorophyll a contacts are provided by His654, Met662, and Tyr670. Residue Trp671 participates in phylloquinone binding. Residues 707 to 727 (LVGLAHFSVGYIFTYAAFLIA) form a helical membrane-spanning segment.

It belongs to the PsaA/PsaB family. As to quaternary structure, the PsaA/B heterodimer binds the P700 chlorophyll special pair and subsequent electron acceptors. PSI consists of a core antenna complex that captures photons, and an electron transfer chain that converts photonic excitation into a charge separation. The eukaryotic PSI reaction center is composed of at least 11 subunits. Requires P700 is a chlorophyll a/chlorophyll a' dimer, A0 is one or more chlorophyll a, A1 is one or both phylloquinones and FX is a shared 4Fe-4S iron-sulfur center. as cofactor.

The protein resides in the plastid. The protein localises to the chloroplast thylakoid membrane. It carries out the reaction reduced [plastocyanin] + hnu + oxidized [2Fe-2S]-[ferredoxin] = oxidized [plastocyanin] + reduced [2Fe-2S]-[ferredoxin]. Its function is as follows. PsaA and PsaB bind P700, the primary electron donor of photosystem I (PSI), as well as the electron acceptors A0, A1 and FX. PSI is a plastocyanin-ferredoxin oxidoreductase, converting photonic excitation into a charge separation, which transfers an electron from the donor P700 chlorophyll pair to the spectroscopically characterized acceptors A0, A1, FX, FA and FB in turn. Oxidized P700 is reduced on the lumenal side of the thylakoid membrane by plastocyanin. The protein is Photosystem I P700 chlorophyll a apoprotein A2 of Chloranthus spicatus (Chulantree).